The chain runs to 344 residues: MTPITPQEALQRTIEHREIFHDEMLHLMRMIMSGELSPVMTAAITTGLRVKKETIGEITAAAQVMREFSHKVQVHDTKHLVDIVGTGGDGANTFNISTCATFVIAAAGAKVSKHGGRSVSSKSGSADAMEALGVHINLQPAQIAQCIGDVGIGFMFAPNHHPAMKNVAPVRKELGVRTIFNILGPLTNPAGAPNILMGVFHEDLVGIQVRALQRLGAEHALVVYGRDGLDEISLGAGTLVGELKDGAVREYEIHPEDFGLRMAGTRALRVENPTESKAMLMGVLQGDEGPARDIVCLNAGAALYAANVADSLEDGLRRAQQALASGAALAKLQQLVAYTQKLAA.

5-phospho-alpha-D-ribose 1-diphosphate contacts are provided by residues Gly-85, 88 to 89, Thr-93, 95 to 98, 113 to 121, and Ser-125; these read GD, NIST, and KHGGRSVSS. Residue Gly-85 participates in anthranilate binding. Ser-97 provides a ligand contact to Mg(2+). Anthranilate is bound at residue Arg-171. Mg(2+) is bound by residues Asp-230 and Glu-231.

The protein belongs to the anthranilate phosphoribosyltransferase family. In terms of assembly, homodimer. The cofactor is Mg(2+).

It carries out the reaction N-(5-phospho-beta-D-ribosyl)anthranilate + diphosphate = 5-phospho-alpha-D-ribose 1-diphosphate + anthranilate. It functions in the pathway amino-acid biosynthesis; L-tryptophan biosynthesis; L-tryptophan from chorismate: step 2/5. In terms of biological role, catalyzes the transfer of the phosphoribosyl group of 5-phosphorylribose-1-pyrophosphate (PRPP) to anthranilate to yield N-(5'-phosphoribosyl)-anthranilate (PRA). The chain is Anthranilate phosphoribosyltransferase from Acidovorax ebreus (strain TPSY) (Diaphorobacter sp. (strain TPSY)).